A 399-amino-acid chain; its full sequence is UDP-galactopyranose mutase (399 aa).

Residues phenylalanine 18, glutamate 38, asparagine 46, and leucine 66 each contribute to the FAD site. Residues phenylalanine 157, threonine 162, tryptophan 166, and tyrosine 191 each contribute to the UDP-alpha-D-galactose site. 224–225 (DW) serves as a coordination point for FAD. Asparagine 282, arginine 292, and tyrosine 328 together coordinate UDP-alpha-D-galactose. Arginine 360 is a binding site for FAD. Residue tyrosine 366 coordinates UDP-alpha-D-galactose. 367 to 369 (LDM) contacts FAD.

This sequence belongs to the UDP-galactopyranose/dTDP-fucopyranose mutase family. Homotetramer. FAD serves as cofactor.

The enzyme catalyses UDP-alpha-D-galactose = UDP-alpha-D-galactofuranose. It functions in the pathway cell wall biogenesis; cell wall polysaccharide biosynthesis. Catalyzes the interconversion through a 2-keto intermediate of uridine diphosphogalactopyranose (UDP-GalP) into uridine diphosphogalactofuranose (UDP-GalF) which is a key building block for cell wall construction in Mycobacterium tuberculosis. In Mycobacterium tuberculosis (strain CDC 1551 / Oshkosh), this protein is UDP-galactopyranose mutase (glf).